The sequence spans 251 residues: MSDEDWQVSRRLFAVLQGGVYNAMLYISRLPQDEREKYKKDFKKRLLDTETGFIKRLRKAEGIKWSFHTRDYHVGYVREMVAGPTTPHSLRLYVYISNPLWHSQYRPGLVNFNKEWPFVNLWIKTGFMWDDIEKQNICIGGEVSPGWGPGMIGIAIKAFSCGERKIEATPVMIIRGEINPKKWCGDCWNLMCLRNSPPETLQRLAMLACGVQAKSWRGCCNQRFVSPYRTPADLEVIQSKPGWCMLWRGKL.

It belongs to the feline lentivirus group Vif protein family.

It is found in the host cytoplasm. The protein resides in the virion. In terms of biological role, determines virus infectivity. The protein is Virion infectivity factor (vif) of Felidae (cat family).